The following is a 1076-amino-acid chain: Carbamoyl phosphate synthase large chain (1076 aa).

A carboxyphosphate synthetic domain region spans residues 1–403 (MPKRTDIQSI…SLQKALRGLE (403 aa)). ATP contacts are provided by arginine 129, arginine 169, glycine 175, glycine 176, glutamate 208, leucine 210, glutamate 215, glycine 241, isoleucine 242, histidine 243, glutamine 285, and glutamate 299. In terms of domain architecture, ATP-grasp 1 spans 133 to 328 (DKAMKSIGLE…IAKVAAKLAV (196 aa)). Glutamine 285, glutamate 299, and asparagine 301 together coordinate Mg(2+). Positions 285, 299, and 301 each coordinate Mn(2+). The interval 404 to 553 (VGAAGLDEKV…YSTYDEECEA (150 aa)) is oligomerization domain. The segment at 554–935 (NPTDKDKIMV…AYAKAELGCG (382 aa)) is carbamoyl phosphate synthetic domain. The ATP-grasp 2 domain occupies 678 to 869 (QQAVQRLGLK…LAKIAARVMV (192 aa)). Residues arginine 714, arginine 753, leucine 755, glutamate 760, glycine 785, valine 786, histidine 787, serine 788, glutamine 828, and glutamate 840 each coordinate ATP. Residues glutamine 828, glutamate 840, and asparagine 842 each contribute to the Mg(2+) site. Residues glutamine 828, glutamate 840, and asparagine 842 each coordinate Mn(2+). One can recognise an MGS-like domain in the interval 936–1076 (SVYPEGGRAL…LHARVKANQA (141 aa)). Residues 936–1076 (SVYPEGGRAL…LHARVKANQA (141 aa)) form an allosteric domain region.

Belongs to the CarB family. As to quaternary structure, composed of two chains; the small (or glutamine) chain promotes the hydrolysis of glutamine to ammonia, which is used by the large (or ammonia) chain to synthesize carbamoyl phosphate. Tetramer of heterodimers (alpha,beta)4. It depends on Mg(2+) as a cofactor. Mn(2+) serves as cofactor.

It carries out the reaction hydrogencarbonate + L-glutamine + 2 ATP + H2O = carbamoyl phosphate + L-glutamate + 2 ADP + phosphate + 2 H(+). It catalyses the reaction hydrogencarbonate + NH4(+) + 2 ATP = carbamoyl phosphate + 2 ADP + phosphate + 2 H(+). Its pathway is amino-acid biosynthesis; L-arginine biosynthesis; carbamoyl phosphate from bicarbonate: step 1/1. It participates in pyrimidine metabolism; UMP biosynthesis via de novo pathway; (S)-dihydroorotate from bicarbonate: step 1/3. Large subunit of the glutamine-dependent carbamoyl phosphate synthetase (CPSase). CPSase catalyzes the formation of carbamoyl phosphate from the ammonia moiety of glutamine, carbonate, and phosphate donated by ATP, constituting the first step of 2 biosynthetic pathways, one leading to arginine and/or urea and the other to pyrimidine nucleotides. The large subunit (synthetase) binds the substrates ammonia (free or transferred from glutamine from the small subunit), hydrogencarbonate and ATP and carries out an ATP-coupled ligase reaction, activating hydrogencarbonate by forming carboxy phosphate which reacts with ammonia to form carbamoyl phosphate. The protein is Carbamoyl phosphate synthase large chain of Vibrio cholerae serotype O1 (strain ATCC 39315 / El Tor Inaba N16961).